The chain runs to 1259 residues: Translocation and assembly module subunit TamB (1259 aa).

Residue methionine 1 is modified to N-formylmethionine. Over 1–6 (MSLWKK) the chain is Cytoplasmic. Residues 7–27 (ISLGVVIVILLLLGSVAFLVG) traverse the membrane as a helical; Signal-anchor for type II membrane protein segment. At 28–1259 (TTSGLHLVFK…ALDLLYQFEF (1232 aa)) the chain is on the periplasmic side.

Belongs to the TamB family. Interacts with TamA to form the translocation and assembly module (TAM).

Its subcellular location is the cell inner membrane. Component of the translocation and assembly module (TAM), which facilitates the insertion and assembly of specific beta-barrel proteins into the outer membrane. Promotes the assembly and secretion across the outer membrane of a subset of autotransporters, such as Ag43. Involved in the assembly of the outer membrane usher protein FimD. In vitro, when TAM is reconstituted into preformed liposomes, it can promote the assembly of several outer membrane proteins, including OmpA, EspP, Ag43 and FadL. TamA is sufficient to catalyze a low level of outer membrane protein (OMP) assembly, but both TamA and TamB are required for efficient OMP assembly. TamB may regulate TamA activity. It could regulate conformational changes in TamA to drive its function in OMP assembly. It could also act as a chaperone that facilitate the transport of nascent membrane proteins across the periplasm to TamA in the outer membrane. Its function is as follows. In addition, is involved in outer membrane lipid homeostasis. Likely transports phospholipids between the inner membrane and the outer membrane. It would provide a bridge-like structure that protects phospholipids as they travel across the periplasm. One possible explanation for the apparent dual function of TAM is that TamB is a somewhat generic transporter of hydrophobic molecules. Functionally, tamB, YdbH and YhdP are redundant, but not equivalent, in performing an essential function for growth and maintaining lipid homeostasis in the outer membrane. The transport functions of TamB and YhdP could be differentiated according to the fatty acid saturation state of the phospholipids, with TamB transporting more unsaturated phospholipids and YhdP more saturated phospholipids. Any of these three proteins is sufficient for growth. The protein is Translocation and assembly module subunit TamB of Escherichia coli (strain K12).